Consider the following 280-residue polypeptide: MSALNLTVRVHPVVLFQVVDAFERRNADSHRVIGTLLGSVDKGVVEVTNCFCVPHKEHDDQVEAELSYALDMYDLNRKVNSNESVVGWWATGNDVTNHSSVIHEYYARECNNPVHLTVDTSLQGGRMGLRAYVCIQLGVPGGKSGCMFTPIPVELTSYEPETFGLKLLQKTVGVSPAHRPKTVPPMLDLAQISEASTKLQSLLDLILKYVDDVIAHKVTPDNAVGRQLLDLIHSVPHMTHEQFTQMFNANVRNLLLVITLSQLIKTQLQLNEKLTFLPAA.

One can recognise an MPN domain in the interval 8–138 (VRVHPVVLFQ…LRAYVCIQLG (131 aa)).

Belongs to the eIF-3 subunit F family. As to quaternary structure, component of the eukaryotic translation initiation factor 3 (eIF-3) complex. The eIF-3 complex interacts with pix.

The protein localises to the cytoplasm. In terms of biological role, component of the eukaryotic translation initiation factor 3 (eIF-3) complex, which is involved in protein synthesis of a specialized repertoire of mRNAs and, together with other initiation factors, stimulates binding of mRNA and methionyl-tRNAi to the 40S ribosome. The eIF-3 complex specifically targets and initiates translation of a subset of mRNAs involved in cell proliferation. The protein is Eukaryotic translation initiation factor 3 subunit F-1 of Drosophila yakuba (Fruit fly).